Consider the following 197-residue polypeptide: MAGRRQGTVERITSETKIMADLTVDGEGKAELRTGVPFLDHMLSLFSVHGFFDLKLQAEGDLDVDAHHTVEDIGICLGGALAKALGDRKGIRRYGHAVVPMDEACASVTLDLSNRPFLVYRVPTLAARVGRFETELVPEFFRAFCQHGGATVHVQGLYGSNTHHILEAIFKALGRALDQATRFDERRSGIPSSKGTL.

The protein belongs to the imidazoleglycerol-phosphate dehydratase family.

It is found in the cytoplasm. The catalysed reaction is D-erythro-1-(imidazol-4-yl)glycerol 3-phosphate = 3-(imidazol-4-yl)-2-oxopropyl phosphate + H2O. It functions in the pathway amino-acid biosynthesis; L-histidine biosynthesis; L-histidine from 5-phospho-alpha-D-ribose 1-diphosphate: step 6/9. The chain is Imidazoleglycerol-phosphate dehydratase from Syntrophobacter fumaroxidans (strain DSM 10017 / MPOB).